A 464-amino-acid chain; its full sequence is D-inositol 3-phosphate glycosyltransferase (464 aa).

Over residues 1–20 the composition is skewed to basic and acidic residues; sequence MEGAPRRPDRHARSEEERHV. Residues 1–44 are disordered; it reads MEGAPRRPDRHARSEEERHVSQYASRLGRRSPAAPTRRRMLRKP. Histidine 53 is a binding site for 1D-myo-inositol 3-phosphate. UDP-N-acetyl-alpha-D-glucosamine is bound by residues 59-60 and glycine 67; that span reads QP. 1D-myo-inositol 3-phosphate-binding positions include 64 to 69, lysine 122, tyrosine 155, threonine 179, and arginine 199; that span reads DAGGMN. Residues arginine 274, lysine 279, and valine 340 each coordinate UDP-N-acetyl-alpha-D-glucosamine. Phenylalanine 349, arginine 350, and alanine 352 together coordinate Mg(2+). Glutamate 362 and glutamate 370 together coordinate UDP-N-acetyl-alpha-D-glucosamine. Threonine 376 is a binding site for Mg(2+).

This sequence belongs to the glycosyltransferase group 1 family. MshA subfamily. Homodimer.

The catalysed reaction is 1D-myo-inositol 3-phosphate + UDP-N-acetyl-alpha-D-glucosamine = 1D-myo-inositol 2-acetamido-2-deoxy-alpha-D-glucopyranoside 3-phosphate + UDP + H(+). Catalyzes the transfer of a N-acetyl-glucosamine moiety to 1D-myo-inositol 3-phosphate to produce 1D-myo-inositol 2-acetamido-2-deoxy-glucopyranoside 3-phosphate in the mycothiol biosynthesis pathway. The polypeptide is D-inositol 3-phosphate glycosyltransferase (Streptomyces avermitilis (strain ATCC 31267 / DSM 46492 / JCM 5070 / NBRC 14893 / NCIMB 12804 / NRRL 8165 / MA-4680)).